The chain runs to 275 residues: Protein unc-50 homolog (275 aa).

Positions 1–26 (MTQYSHVKYTQSPTPSVVSGYSSASR) are enriched in polar residues. The segment at 1–39 (MTQYSHVKYTQSPTPSVVSGYSSASRLHSPLPPPANHRR) is disordered. Residues 1-99 (MTQYSHVKYT…TKSQFARDDP (99 aa)) lie on the Cytoplasmic side of the membrane. The helical transmembrane segment at 100–120 (AFLVLLVVCLCVTSLGFAYVL) threads the bilayer. Residues 121–129 (GLSFWQSIS) are Lumenal-facing. The chain crosses the membrane as a helical span at residues 130-150 (FIFYVVFVDCIFVGIIIASFF). The Cytoplasmic segment spans residues 151 to 178 (WAVTNRYLRTNSLEPDIEWGYAFDVHLN). Residues 179-199 (AFFPPLMLLHFIQLFFYNWLI) traverse the membrane as a helical segment. The Lumenal segment spans residues 200–207 (SQTWFISR). The helical transmembrane segment at 208–228 (FLGNTFWLMGMGYYVYITFLG) threads the bilayer. Residues 229 to 239 (YNCIPHLKNTR) lie on the Cytoplasmic side of the membrane. The chain crosses the membrane as a helical span at residues 240–260 (IILIALPIIFLLFLVVTIIGW). Topologically, residues 261 to 275 (NATISFVNFYKYRVY) are lumenal.

It belongs to the unc-50 family.

Its subcellular location is the golgi apparatus membrane. Its function is as follows. Required for cell surface expression of acetylcholine receptors. This Drosophila melanogaster (Fruit fly) protein is Protein unc-50 homolog.